A 477-amino-acid polypeptide reads, in one-letter code: uncharacterized protein (477 aa).

Residues 1-18 form the signal peptide; sequence MWTALVLVWISSVPLSRS. The Extracellular segment spans residues 19-427; that stretch reads HTVPAVPRHL…DPLTPSLVNK (409 aa). Asparagine 40, asparagine 51, and asparagine 77 each carry an N-linked (GlcNAc...) asparagine glycan. Disordered stretches follow at residues 79–103, 239–366, and 378–398; these read TRVT…GTAD, GTIN…TGGP, and KATA…DVKV. Low complexity predominate over residues 85–97; it reads TTPHGTNTSTPTT. 2 stretches are compositionally biased toward polar residues: residues 253–288 and 298–309; these read PAKS…QPVH and PSNTTLEPNTPK. N-linked (GlcNAc...) asparagine glycosylation occurs at asparagine 300. Composition is skewed to low complexity over residues 310–326, 348–361, and 378–393; these read SVAS…QVQT, TSPT…LPTQ, and KATA…SRSS. Residues 428-448 form a helical membrane-spanning segment; sequence MFLLVVLIVGVTLFIAVLMMF. The Cytoplasmic portion of the chain corresponds to 449-477; the sequence is ALQAYESYKKKDYTQVDYLINGMYADSEM.

Its subcellular location is the cell membrane. The protein localises to the golgi apparatus. It is found in the trans-Golgi network membrane. This is an uncharacterized protein from Rattus norvegicus (Rat).